A 754-amino-acid polypeptide reads, in one-letter code: Peptidyl-prolyl cis-trans isomerase G (754 aa).

The region spanning 11 to 176 (FFDIAINNQP…AEVRILSCGE (166 aa)) is the PPIase cyclophilin-type domain. Basic residues predominate over residues 182 to 193 (KVKKEEKKRHKS). The segment at 182–754 (KVKKEEKKRH…SPGTDEDKSG (573 aa)) is disordered. Residues 194-216 (SSSSSSSSSDSDSSSDSQSSSDS) are compositionally biased toward low complexity. The span at 228-253 (KKRKKKHRKNSRKHKKEKKKRKKSKK) shows a compositional bias: basic residues. A phosphoserine mark is found at serine 254, serine 256, serine 257, serine 259, and serine 290. Positions 292–310 (PKADEKERKNREREREREC) are enriched in basic and acidic residues. A Phosphoserine modification is found at serine 315. A compositionally biased stretch (basic residues) spans 329-347 (SGRKIKGRGPRRYRTPSRS). Composition is skewed to basic and acidic residues over residues 348 to 368 (RSRDRFRRSETPPHWRQEMQR) and 379 to 449 (RWIK…DKYK). The residue at position 356 (serine 356) is a Phosphoserine. Threonine 358 carries the phosphothreonine modification. Position 386 is a phosphoserine (serine 386). Residue lysine 392 forms a Glycyl lysine isopeptide (Lys-Gly) (interchain with G-Cter in SUMO2) linkage. Residues serine 397, serine 413, and serine 415 each carry the phosphoserine modification. The span at 450–462 (NKVKKRAKSKSRS) shows a compositional bias: basic residues. 2 stretches are compositionally biased toward basic and acidic residues: residues 463-553 (KSKE…DITK) and 578-599 (RTHDRDRSRSKEYHRYREQEYR). A compositionally biased stretch (basic residues) spans 616 to 627 (SRSKDRRRRRRD). The span at 628–686 (SRSSEREESQSRNKDKYRNQESKSSHRKENSESEKRMYSKSRDHNSSNNSREKKADRDQ) shows a compositional bias: basic and acidic residues. Phosphoserine is present on residues serine 687 and serine 690. The span at 687-698 (SPFSKIKQSSQD) shows a compositional bias: polar residues. Residue lysine 693 forms a Glycyl lysine isopeptide (Lys-Gly) (interchain with G-Cter in SUMO2) linkage. 3 positions are modified to phosphoserine: serine 696, serine 744, and serine 745. The segment covering 707–754 (KNKEDEKIRSSVEKENQKSKGQENDHVHEKNKKFDHESSPGTDEDKSG) has biased composition (basic and acidic residues). Threonine 748 bears the Phosphothreonine mark. Serine 753 carries the phosphoserine modification.

In terms of assembly, interacts with CLK1, PNN and with the phosphorylated C-terminal domain of RNA polymerase II. In terms of tissue distribution, ubiquitous.

The protein localises to the nucleus matrix. It is found in the nucleus speckle. It catalyses the reaction [protein]-peptidylproline (omega=180) = [protein]-peptidylproline (omega=0). Its activity is regulated as follows. Inhibited by cyclosporin A (CsA). In terms of biological role, PPIase that catalyzes the cis-trans isomerization of proline imidic peptide bonds in oligopeptides and may therefore assist protein folding. May be implicated in the folding, transport, and assembly of proteins. May play an important role in the regulation of pre-mRNA splicing. The chain is Peptidyl-prolyl cis-trans isomerase G (PPIG) from Homo sapiens (Human).